A 606-amino-acid polypeptide reads, in one-letter code: Neutral/alkaline invertase 3, chloroplastic (606 aa).

A chloroplast-targeting transit peptide spans 1–58; that stretch reads MGIAEVALHSMPGAFAAHSPASNLPLAADAARGRRRRSANSLHSSRALQGPVRFPGLR. A disordered region spans residues 97–126; the sequence is RVPGQAVGGNGSVNGSAAKPPPQRRKASSV.

Belongs to the glycosyl hydrolase 100 family.

The protein localises to the plastid. Its subcellular location is the chloroplast. The enzyme catalyses Hydrolysis of terminal non-reducing beta-D-fructofuranoside residues in beta-D-fructofuranosides.. Its function is as follows. Mitochondrial invertase that cleaves sucrose into glucose and fructose. This Oryza sativa subsp. japonica (Rice) protein is Neutral/alkaline invertase 3, chloroplastic.